Consider the following 166-residue polypeptide: Large ribosomal subunit protein uL10 (166 aa).

The protein belongs to the universal ribosomal protein uL10 family. In terms of assembly, part of the ribosomal stalk of the 50S ribosomal subunit. The N-terminus interacts with L11 and the large rRNA to form the base of the stalk. The C-terminus forms an elongated spine to which L12 dimers bind in a sequential fashion forming a multimeric L10(L12)X complex.

Its function is as follows. Forms part of the ribosomal stalk, playing a central role in the interaction of the ribosome with GTP-bound translation factors. This is Large ribosomal subunit protein uL10 from Pseudomonas syringae pv. syringae (strain B728a).